The chain runs to 429 residues: tRNA-2-methylthio-N(6)-dimethylallyladenosine synthase (429 aa).

The MTTase N-terminal domain occupies 2 to 115; it reads KLLYLQTLGC…ISEAVKTPKF (114 aa). Residues Cys-11, Cys-46, Cys-78, Cys-147, Cys-151, and Cys-154 each coordinate [4Fe-4S] cluster. Residues 133–365 form the Radical SAM core domain; that stretch reads RGSPYKAFVN…QSRHNEILDE (233 aa). The 62-residue stretch at 368–429 folds into the TRAM domain; sequence KNQVGKIFDV…RMVLYGKITA (62 aa).

The protein belongs to the methylthiotransferase family. MiaB subfamily. In terms of assembly, monomer. The cofactor is [4Fe-4S] cluster.

It localises to the cytoplasm. It catalyses the reaction N(6)-dimethylallyladenosine(37) in tRNA + (sulfur carrier)-SH + AH2 + 2 S-adenosyl-L-methionine = 2-methylsulfanyl-N(6)-dimethylallyladenosine(37) in tRNA + (sulfur carrier)-H + 5'-deoxyadenosine + L-methionine + A + S-adenosyl-L-homocysteine + 2 H(+). In terms of biological role, catalyzes the methylthiolation of N6-(dimethylallyl)adenosine (i(6)A), leading to the formation of 2-methylthio-N6-(dimethylallyl)adenosine (ms(2)i(6)A) at position 37 in tRNAs that read codons beginning with uridine. In Campylobacter hominis (strain ATCC BAA-381 / DSM 21671 / CCUG 45161 / LMG 19568 / NCTC 13146 / CH001A), this protein is tRNA-2-methylthio-N(6)-dimethylallyladenosine synthase.